The primary structure comprises 783 residues: Lon protease (783 aa).

Residues 11 to 203 (IPVLPLRDVV…FLMGQMESEI (193 aa)) form the Lon N-terminal domain. 355–362 (GPPGVGKT) lines the ATP pocket. A Lon proteolytic domain is found at 591 to 772 (SNRIGQVTGL…DEVLKVALER (182 aa)). Residues S678 and K721 contribute to the active site.

Belongs to the peptidase S16 family. As to quaternary structure, homohexamer. Organized in a ring with a central cavity.

It localises to the cytoplasm. It carries out the reaction Hydrolysis of proteins in presence of ATP.. ATP-dependent serine protease that mediates the selective degradation of mutant and abnormal proteins as well as certain short-lived regulatory proteins. Required for cellular homeostasis and for survival from DNA damage and developmental changes induced by stress. Degrades polypeptides processively to yield small peptide fragments that are 5 to 10 amino acids long. Binds to DNA in a double-stranded, site-specific manner. Regulates swarmer cell differentiation of V.parahaemolyticus. The chain is Lon protease from Vibrio parahaemolyticus serotype O3:K6 (strain RIMD 2210633).